The sequence spans 66 residues: Small ribosomal subunit protein bS21 (66 aa).

It belongs to the bacterial ribosomal protein bS21 family.

This is Small ribosomal subunit protein bS21 from Rickettsia typhi (strain ATCC VR-144 / Wilmington).